A 114-amino-acid polypeptide reads, in one-letter code: MSISLLCCAAFPLLWAGPVNAGVTQTPKFRILKIGQSMTLQCAQDMNHNYMYWYRQDPGMGLKLIYYSVGAGITDKGEVPNGYNVSRSTTEDFPLRLELAAPSQTSVYFCASSY.

A signal peptide spans 1 to 21; the sequence is MSISLLCCAAFPLLWAGPVNA. Residues 22–114 enclose the Ig-like domain; sequence GVTQTPKFRI…TSVYFCASSY (93 aa). A disulfide bridge links cysteine 42 with cysteine 110. Asparagine 84 is a glycosylation site (N-linked (GlcNAc...) asparagine).

Alpha-beta TR is a heterodimer composed of an alpha and beta chain; disulfide-linked. The alpha-beta TR is associated with the transmembrane signaling CD3 coreceptor proteins to form the TR-CD3 (TcR or TCR). The assembly of alpha-beta TR heterodimers with CD3 occurs in the endoplasmic reticulum where a single alpha-beta TR heterodimer associates with one CD3D-CD3E heterodimer, one CD3G-CD3E heterodimer and one CD247 homodimer forming a stable octameric structure. CD3D-CD3E and CD3G-CD3E heterodimers preferentially associate with TR alpha and TR beta chains, respectively. The association of the CD247 homodimer is the last step of TcR assembly in the endoplasmic reticulum and is required for transport to the cell surface.

Its subcellular location is the cell membrane. V region of the variable domain of T cell receptor (TR) beta chain that participates in the antigen recognition. Alpha-beta T cell receptors are antigen specific receptors which are essential to the immune response and are present on the cell surface of T lymphocytes. Recognize peptide-major histocompatibility (MH) (pMH) complexes that are displayed by antigen presenting cells (APC), a prerequisite for efficient T cell adaptive immunity against pathogens. Binding of alpha-beta TR to pMH complex initiates TR-CD3 clustering on the cell surface and intracellular activation of LCK that phosphorylates the ITAM motifs of CD3G, CD3D, CD3E and CD247 enabling the recruitment of ZAP70. In turn ZAP70 phosphorylates LAT, which recruits numerous signaling molecules to form the LAT signalosome. The LAT signalosome propagates signal branching to three major signaling pathways, the calcium, the mitogen-activated protein kinase (MAPK) kinase and the nuclear factor NF-kappa-B (NF-kB) pathways, leading to the mobilization of transcription factors that are critical for gene expression and essential for T cell growth and differentiation. The T cell repertoire is generated in the thymus, by V-(D)-J rearrangement. This repertoire is then shaped by intrathymic selection events to generate a peripheral T cell pool of self-MH restricted, non-autoaggressive T cells. Post-thymic interaction of alpha-beta TR with the pMH complexes shapes TR structural and functional avidity. The polypeptide is T cell receptor beta variable 6-6 (Homo sapiens (Human)).